The sequence spans 188 residues: Large ribosomal subunit protein uL22 (188 aa).

The segment at 155-188 (STPEGAKKGKKKKGTKDAVEKSSKRVKTAATAAH) is disordered.

This sequence belongs to the universal ribosomal protein uL22 family.

In Agriotes lineatus (Lined click beetle), this protein is Large ribosomal subunit protein uL22 (RpL17).